Here is a 243-residue protein sequence, read N- to C-terminus: Mannosyl-3-phosphoglycerate phosphatase (243 aa).

Asp8 (nucleophile) is an active-site residue. Residues Asp8, Asp10, Ser169, and Asp204 each contribute to the Mg(2+) site.

It belongs to the HAD-like hydrolase superfamily. MPGP family. Requires Mg(2+) as cofactor.

It is found in the cytoplasm. It catalyses the reaction 2-O-(alpha-D-mannosyl)-3-phosphoglycerate + H2O = (2R)-2-O-(alpha-D-mannosyl)-glycerate + phosphate. It functions in the pathway carbohydrate biosynthesis; 2-(alpha-D-mannosyl)-D-glycerate biosynthesis; 2-(alpha-D-mannosyl)-D-glycerate from GDP-alpha-D-mannose (MPG route): step 2/2. Its function is as follows. Hydrolyzes mannosyl-3-phosphoglycerate (MPG) to form the osmolyte mannosylglycerate (MG). The enzyme is absolutely specific for MPG. The polypeptide is Mannosyl-3-phosphoglycerate phosphatase (Pyrococcus horikoshii (strain ATCC 700860 / DSM 12428 / JCM 9974 / NBRC 100139 / OT-3)).